We begin with the raw amino-acid sequence, 406 residues long: Cysteine desulfurase (406 aa).

An N6-(pyridoxal phosphate)lysine modification is found at Lys226. The active-site Cysteine persulfide intermediate is Cys364.

Belongs to the class-V pyridoxal-phosphate-dependent aminotransferase family. Csd subfamily. Homodimer. Interacts with SufE and the SufBCD complex composed of SufB, SufC and SufD. The interaction with SufE is required to mediate the direct transfer of the sulfur atom from the S-sulfanylcysteine. Requires pyridoxal 5'-phosphate as cofactor.

The protein resides in the cytoplasm. It carries out the reaction (sulfur carrier)-H + L-cysteine = (sulfur carrier)-SH + L-alanine. The catalysed reaction is L-selenocysteine + AH2 = hydrogenselenide + L-alanine + A + H(+). It functions in the pathway cofactor biosynthesis; iron-sulfur cluster biosynthesis. Cysteine desulfurases mobilize the sulfur from L-cysteine to yield L-alanine, an essential step in sulfur metabolism for biosynthesis of a variety of sulfur-containing biomolecules. Component of the suf operon, which is activated and required under specific conditions such as oxidative stress and iron limitation. Acts as a potent selenocysteine lyase in vitro, that mobilizes selenium from L-selenocysteine. Selenocysteine lyase activity is however unsure in vivo. The polypeptide is Cysteine desulfurase (Yersinia pseudotuberculosis serotype IB (strain PB1/+)).